A 611-amino-acid chain; its full sequence is UvrABC system protein C (611 aa).

The GIY-YIG domain occupies 19-97; it reads QRPGVYRMVD…IKELRPRYNV (79 aa). The region spanning 207–242 is the UVR domain; that stretch reads NQVIEELGARMEAASERLEFEAAAQYRDRIQALQAV.

The protein belongs to the UvrC family. Interacts with UvrB in an incision complex.

It localises to the cytoplasm. The UvrABC repair system catalyzes the recognition and processing of DNA lesions. UvrC both incises the 5' and 3' sides of the lesion. The N-terminal half is responsible for the 3' incision and the C-terminal half is responsible for the 5' incision. The chain is UvrABC system protein C from Alkalilimnicola ehrlichii (strain ATCC BAA-1101 / DSM 17681 / MLHE-1).